Here is a 654-residue protein sequence, read N- to C-terminus: NADH-ubiquinone oxidoreductase chain 5 (654 aa).

16 consecutive transmembrane segments (helical) span residues 1 to 21 (MYLA…FLGR), 30 to 50 (LITC…FYEV), 76 to 96 (FIYD…SALV), 113 to 133 (FFAY…GDNY), 135 to 155 (VMFI…NFWF), 178 to 198 (FSIG…TTVF), 200 to 220 (LAPF…LVAA), 241 to 261 (TPVS…YLLL), 274 to 294 (LILI…TGLL), 301 to 320 (VIAY…CGLS), 324 to 346 (VALF…AGSV), 365 to 385 (LLPF…ALPF), 406 to 426 (SGNL…MYSI), 451 to 471 (PLIM…FGYV), 510 to 530 (FLPL…YWIF), and 612 to 632 (TYAM…FFIG).

The protein belongs to the complex I subunit 5 family.

The protein localises to the mitochondrion inner membrane. The catalysed reaction is a ubiquinone + NADH + 5 H(+)(in) = a ubiquinol + NAD(+) + 4 H(+)(out). Its function is as follows. Core subunit of the mitochondrial membrane respiratory chain NADH dehydrogenase (Complex I) that is believed to belong to the minimal assembly required for catalysis. Complex I functions in the transfer of electrons from NADH to the respiratory chain. The immediate electron acceptor for the enzyme is believed to be ubiquinone. This is NADH-ubiquinone oxidoreductase chain 5 (ND5) from Rhizopus stolonifer (Rhizopus nigricans).